The primary structure comprises 409 residues: uncharacterized protein (409 aa).

In terms of domain architecture, OBG-type G spans isoleucine 5–glutamate 274. GTP contacts are provided by residues glycine 11 to serine 18 and aspartate 83 to leucine 87.

The protein belongs to the TRAFAC class OBG-HflX-like GTPase superfamily. OBG GTPase family.

It localises to the cytoplasm. The protein localises to the nucleus. This is an uncharacterized protein from Schizosaccharomyces pombe (strain 972 / ATCC 24843) (Fission yeast).